The chain runs to 572 residues: Probable lysosomal cobalamin transporter (572 aa).

9 consecutive transmembrane segments (helical) span residues 8–28 (VIWFAYLIVIFVLIVVASVFI), 40–60 (FVTFICVFSIAALLATVMLLP), 95–115 (IIYYSLYFLDALLCFVGIPFA), 145–165 (TLTFIAVVIALVLVGFFAPMM), 188–208 (AFTFLLGFVTIIGSCLYAFYT), 314–334 (GGFCLFLVGLSTWISLLMTVV), 374–394 (IIFALIVFFFFWGSVVGVVAV), 421–441 (AVLTLITLGLNYSIVMMLVPG), and 499–519 (VALNFPLFGALLLWAHFLFLA). The disordered stretch occupies residues 522-544 (GRRRGRGRESVSKHQKKRQSYMR).

The protein belongs to the LIMR family. LMBRD1 subfamily.

It localises to the lysosome membrane. In terms of biological role, probable lysosomal cobalamin transporter. Required to export cobalamin from lysosomes allowing its conversion to cofactors. This is Probable lysosomal cobalamin transporter from Aspergillus fumigatus (strain ATCC MYA-4609 / CBS 101355 / FGSC A1100 / Af293) (Neosartorya fumigata).